A 347-amino-acid polypeptide reads, in one-letter code: Involucrin (347 aa).

Disordered stretches follow at residues 1-43 (MSQQ…LPAP) and 56-347 (PLED…RRSL). Positions 27–36 (ADTQQEQVKQ) are enriched in polar residues. Composition is skewed to low complexity over residues 70–114 (VPEQ…QQES) and 138–161 (DQQQ…QQES). 2 stretches are compositionally biased toward basic and acidic residues: residues 164–173 (QELHVDHHQQ) and 212–221 (QELHVDHHQQ). 2 stretches are compositionally biased toward low complexity: residues 222-241 (QQES…QQES) and 265-285 (DQQQ…QQQE). Residues 287–341 (QEDHQKAEHLEQEEAQREQQLKGQLEQEKKGVYQHLDQELTKRDEHLEKKGEHCW) are compositionally biased toward basic and acidic residues.

It belongs to the involucrin family. In terms of assembly, directly or indirectly cross-linked to cornifelin (CNFN). Substrate of transglutaminase. Specific glutamines or lysines are cross-linked to keratins, desmoplakin and to inter involucrin molecules. In terms of tissue distribution, keratinocytes of epidermis and other stratified squamous epithelia.

It is found in the cytoplasm. Its function is as follows. Part of the insoluble cornified cell envelope (CE) of stratified squamous epithelia. The protein is Involucrin (IVL) of Sus scrofa (Pig).